The following is a 101-amino-acid chain: MILEHVLVLSAYLFSIGIYGLITSRNMVRALMCLELILNAVNINFVTFSDFFDSRQLRGDIFSIFVIAIAAAEAAIGPAILSSIFRNRKSTRINQSNLLNK.

The next 3 membrane-spanning stretches (helical) occupy residues 2–22 (ILEH…YGLI), 32–52 (MCLE…SDFF), and 61–81 (IFSI…PAIL).

It belongs to the complex I subunit 4L family. NDH is composed of at least 16 different subunits, 5 of which are encoded in the nucleus.

Its subcellular location is the plastid. It is found in the chloroplast thylakoid membrane. The enzyme catalyses a plastoquinone + NADH + (n+1) H(+)(in) = a plastoquinol + NAD(+) + n H(+)(out). The catalysed reaction is a plastoquinone + NADPH + (n+1) H(+)(in) = a plastoquinol + NADP(+) + n H(+)(out). Functionally, NDH shuttles electrons from NAD(P)H:plastoquinone, via FMN and iron-sulfur (Fe-S) centers, to quinones in the photosynthetic chain and possibly in a chloroplast respiratory chain. The immediate electron acceptor for the enzyme in this species is believed to be plastoquinone. Couples the redox reaction to proton translocation, and thus conserves the redox energy in a proton gradient. The polypeptide is NAD(P)H-quinone oxidoreductase subunit 4L, chloroplastic (Platanus occidentalis (Sycamore)).